A 22-amino-acid polypeptide reads, in one-letter code: Myofibril-bound serine protease (22 aa).

It belongs to the peptidase S1 family. In terms of tissue distribution, detected in muscle (at protein level).

It is found in the cytoplasm. Inhibited by the serine protease inhibitors, antipain, aprotinin, DFP, leupeptin, STI and TLCK, and by the cysteine proteinase inhibitors DTNB and to a lesser extent E-64. Not inhibited by the metalloproteinase inhibitor EDTA. Its function is as follows. Serine protease that selectively cleaves Arg-|-Xaa bonds. This chain is Myofibril-bound serine protease, found in Cyprinus carpio (Common carp).